Reading from the N-terminus, the 193-residue chain is dTTP/UTP pyrophosphatase (193 aa).

The Proton acceptor role is filled by aspartate 75.

This sequence belongs to the Maf family. YhdE subfamily. Requires a divalent metal cation as cofactor.

Its subcellular location is the cytoplasm. The enzyme catalyses dTTP + H2O = dTMP + diphosphate + H(+). The catalysed reaction is UTP + H2O = UMP + diphosphate + H(+). Its function is as follows. Nucleoside triphosphate pyrophosphatase that hydrolyzes dTTP and UTP. May have a dual role in cell division arrest and in preventing the incorporation of modified nucleotides into cellular nucleic acids. This Koribacter versatilis (strain Ellin345) protein is dTTP/UTP pyrophosphatase.